A 123-amino-acid polypeptide reads, in one-letter code: DPEP2 neighbor protein (123 aa).

Residues 67-123 (APLATPTKAEAEKPAPRRAPKRRQATIESDKDLGCSSPKIRRLEHRGRRLTPQKLAG) form a disordered region. The span at 105 to 117 (KIRRLEHRGRRLT) shows a compositional bias: basic residues.

This chain is DPEP2 neighbor protein, found in Homo sapiens (Human).